A 362-amino-acid polypeptide reads, in one-letter code: Salactin (362 aa).

Residues 1-10 (MSDDTEDDSG) show a composition bias toward acidic residues. The tract at residues 1–28 (MSDDTEDDSGGESTADMEFGEQPAPLGV) is disordered.

As to quaternary structure, forms dynamically unstable filaments. Monomers are added at the growing filament end. In vitro, salactin polymerizes in the presence of ATP and AMP-PNP but not in the presence of ADP, GTP, ATPgammaS or buffer alone.

It is found in the cytoplasm. Its function is as follows. Actin homolog which might be involved in partitioning DNA between daughter cells when chromosomal copy number is low. This is Salactin from Halobacterium salinarum (strain ATCC 700922 / JCM 11081 / NRC-1) (Halobacterium halobium).